The following is a 212-amino-acid chain: Uracil phosphoribosyltransferase (212 aa).

Residues arginine 78, arginine 103, and aspartate 130–serine 138 each bind 5-phospho-alpha-D-ribose 1-diphosphate. Uracil-binding positions include isoleucine 193 and glycine 198–alanine 200. 5-phospho-alpha-D-ribose 1-diphosphate is bound at residue aspartate 199.

This sequence belongs to the UPRTase family. It depends on Mg(2+) as a cofactor.

The enzyme catalyses UMP + diphosphate = 5-phospho-alpha-D-ribose 1-diphosphate + uracil. Its pathway is pyrimidine metabolism; UMP biosynthesis via salvage pathway; UMP from uracil: step 1/1. With respect to regulation, allosterically activated by GTP. In terms of biological role, catalyzes the conversion of uracil and 5-phospho-alpha-D-ribose 1-diphosphate (PRPP) to UMP and diphosphate. The sequence is that of Uracil phosphoribosyltransferase from Bordetella petrii (strain ATCC BAA-461 / DSM 12804 / CCUG 43448).